Consider the following 247-residue polypeptide: Ubiquinone biosynthesis O-methyltransferase (247 aa).

Arg-40, Gly-71, Asp-92, and Met-135 together coordinate S-adenosyl-L-methionine.

This sequence belongs to the methyltransferase superfamily. UbiG/COQ3 family.

It carries out the reaction a 3-demethylubiquinol + S-adenosyl-L-methionine = a ubiquinol + S-adenosyl-L-homocysteine + H(+). It catalyses the reaction a 3-(all-trans-polyprenyl)benzene-1,2-diol + S-adenosyl-L-methionine = a 2-methoxy-6-(all-trans-polyprenyl)phenol + S-adenosyl-L-homocysteine + H(+). Its pathway is cofactor biosynthesis; ubiquinone biosynthesis. In terms of biological role, O-methyltransferase that catalyzes the 2 O-methylation steps in the ubiquinone biosynthetic pathway. In Ruegeria sp. (strain TM1040) (Silicibacter sp.), this protein is Ubiquinone biosynthesis O-methyltransferase.